The sequence spans 616 residues: Heme A synthase-mitochondrial ferredoxin fusion protein (616 aa).

A mitochondrion-targeting transit peptide spans 1 to 45; it reads MNISRSSGLMRQFLLQPLRKGCDISCLGRSSWRMSRSFSGSSVLN. The heme a synthase cox15-like stretch occupies residues 45 to 465; sequence NEINLSRTKN…AALSLAQRLH (421 aa). Residues 46 to 97 are Mitochondrial matrix-facing; sequence EINLSRTKNLFLNDCKFNKNSFEKFFARRLSNSVAPTPGGILQETEKIPSKK. The chain crosses the membrane as a helical span at residues 98 to 118; that stretch reads VAFWLLGSSALVLAIVVVGGI. Over 119–182 the chain is Mitochondrial intermembrane; that stretch reads TRLTESGLSI…NIFFWEWFHR (64 aa). Heme o is bound at residue H181. The helical transmembrane segment at 183-203 threads the bilayer; sequence VLGRGIGLTILLPSIYMIVTK. At 204–212 the chain is on the mitochondrial matrix side; sequence RASPWLSKR. The chain crosses the membrane as a helical span at residues 213 to 233; that stretch reads LIGLTGLVGLQGVIGWWMVKS. At 234-254 the chain is on the mitochondrial intermembrane side; it reads GLSEELFSDGSHPRVSHYRLA. The helical transmembrane segment at 255-275 threads the bilayer; it reads THLAAAVALYIGLVWTGHGIL. H256 provides a ligand contact to heme o. Topologically, residues 276–311 are mitochondrial matrix; the sequence is QRHAFLKSMKSGSTSQLTSMVSSVQKMKGFRTSVNS. Residues 312 to 332 traverse the membrane as a helical segment; it reads FVGLVLITLLSGAFVAGLDAG. Residues 333–380 lie on the Mitochondrial intermembrane side of the membrane; it reads MIYCTFPEMGEGRLAPSKSELFDQRFCRKDDKSDLIWRNMIDNPSLVQ. A helical membrane pass occupies residues 381-401; the sequence is LEHRILAITTFVAACGLFIFS. H383 contacts heme b. Topologically, residues 402-417 are mitochondrial matrix; the sequence is RAKRNILPKKIKTSIN. Residues 418–438 form a helical membrane-spanning segment; sequence VVTGVVTAQATLGIMTLIYVV. A topological domain (mitochondrial intermembrane) is located at residue P439. The helical transmembrane segment at 440 to 460 threads the bilayer; it reads VPLAALHQAGSLVTLTAALSL. Residue H446 participates in heme b binding. Over 461–616 the chain is Mitochondrial matrix; sequence AQRLHPEYAL…RNIRLERPKA (156 aa). Residues 502–606 form the 2Fe-2S ferredoxin-type domain; it reads FRPSFHSEIK…GIRVRIPAQT (105 aa). A mitochondrial ferredoxin yah1-like region spans residues 516-616; that stretch reads GTGIKVFFVT…RNIRLERPKA (101 aa). 4 residues coordinate [2Fe-2S] cluster: C541, C547, C550, and C587.

It in the N-terminal section; belongs to the COX15/CtaA family. Type 2 subfamily. The protein in the C-terminal section; belongs to the adrenodoxin/putidaredoxin family. In terms of assembly, homodimer. The cofactor is heme b. It depends on [2Fe-2S] cluster as a cofactor. In terms of processing, the etp1 preprotein is cleaved into 2 chains after imort into mitochondria. The N-terminal chain containing a heme A synthase cox15-like domain etp1(cd) is a subunit of the membrane-embedded cytochrome c oxidase complex and functions in the respiratory chain. The C-terminal chain containing a ferredoxin yah1-like domain etp1(fd) is released and serves in the matrix as electron transfer protein.

The protein localises to the mitochondrion inner membrane. It is found in the mitochondrion matrix. The enzyme catalyses Fe(II)-heme o + 2 A + H2O = Fe(II)-heme a + 2 AH2. Its pathway is porphyrin-containing compound metabolism; heme A biosynthesis; heme A from heme O: step 1/1. Its function is as follows. Catalyzes the second reaction in the biosynthesis of heme A, a prosthetic group of mitochondrial cytochrome c oxidase (CcO). Heme A is synthesized from heme B by two sequential enzymatic reactions catalyzed by heme O synthase (HOS) and heme A synthase (HAS). HAS catalyzes the conversion of heme O to heme A by two successive hydroxylations of the methyl group at C8, in a reaction that involves matrix ferredoxin and ferredoxin reductase. The first hydroxylation forms heme I, the second hydroxylation results in an unstable dihydroxymethyl group, which spontaneously dehydrates, resulting in the formyl group of heme A. Iron-sulfur protein that transfers electrons in a wide variety of metabolic reactions. Involved in heme A biosynthesis and in iron-sulfur cluster assembly. Transfers electrons from adrenodoxin reductase arh1 to heme A synthase etp1(cd), a heme protein that catalyzes the conversion of heme O to heme A. Required for the de novo synthesis of Fe-S clusters on iron sulfur cluster assembly protein isu1. Interact in its reduced state with isu1 to productively deliver electrons for Fe-S cluster synthesis. Essential for coenzyme Q biosynthesis. May transfer the electrons required for the hydroxylation reaction performed by coq6. This Schizosaccharomyces pombe (strain 972 / ATCC 24843) (Fission yeast) protein is Heme A synthase-mitochondrial ferredoxin fusion protein.